A 319-amino-acid polypeptide reads, in one-letter code: 4-hydroxy-3-methylbut-2-enyl diphosphate reductase (319 aa).

C18 serves as a coordination point for [4Fe-4S] cluster. (2E)-4-hydroxy-3-methylbut-2-enyl diphosphate-binding residues include H47 and H81. Residues H47 and H81 each contribute to the dimethylallyl diphosphate site. The isopentenyl diphosphate site is built by H47 and H81. C103 contributes to the [4Fe-4S] cluster binding site. H131 is a binding site for (2E)-4-hydroxy-3-methylbut-2-enyl diphosphate. H131 contacts dimethylallyl diphosphate. H131 provides a ligand contact to isopentenyl diphosphate. E133 (proton donor) is an active-site residue. Residue T172 coordinates (2E)-4-hydroxy-3-methylbut-2-enyl diphosphate. C202 serves as a coordination point for [4Fe-4S] cluster. Residues S230, S231, N232, and S275 each contribute to the (2E)-4-hydroxy-3-methylbut-2-enyl diphosphate site. Dimethylallyl diphosphate is bound by residues S230, S231, N232, and S275. Isopentenyl diphosphate-binding residues include S230, S231, N232, and S275.

The protein belongs to the IspH family. It depends on [4Fe-4S] cluster as a cofactor.

The enzyme catalyses isopentenyl diphosphate + 2 oxidized [2Fe-2S]-[ferredoxin] + H2O = (2E)-4-hydroxy-3-methylbut-2-enyl diphosphate + 2 reduced [2Fe-2S]-[ferredoxin] + 2 H(+). It catalyses the reaction dimethylallyl diphosphate + 2 oxidized [2Fe-2S]-[ferredoxin] + H2O = (2E)-4-hydroxy-3-methylbut-2-enyl diphosphate + 2 reduced [2Fe-2S]-[ferredoxin] + 2 H(+). It participates in isoprenoid biosynthesis; dimethylallyl diphosphate biosynthesis; dimethylallyl diphosphate from (2E)-4-hydroxy-3-methylbutenyl diphosphate: step 1/1. Its pathway is isoprenoid biosynthesis; isopentenyl diphosphate biosynthesis via DXP pathway; isopentenyl diphosphate from 1-deoxy-D-xylulose 5-phosphate: step 6/6. Catalyzes the conversion of 1-hydroxy-2-methyl-2-(E)-butenyl 4-diphosphate (HMBPP) into a mixture of isopentenyl diphosphate (IPP) and dimethylallyl diphosphate (DMAPP). Acts in the terminal step of the DOXP/MEP pathway for isoprenoid precursor biosynthesis. The chain is 4-hydroxy-3-methylbut-2-enyl diphosphate reductase from Methylocella silvestris (strain DSM 15510 / CIP 108128 / LMG 27833 / NCIMB 13906 / BL2).